A 311-amino-acid polypeptide reads, in one-letter code: Malate dehydrogenase (311 aa).

Residues 7–13 (GAAGGIG) and aspartate 34 each bind NAD(+). The substrate site is built by arginine 81 and arginine 87. Residues asparagine 94 and 117–119 (ITN) each bind NAD(+). Positions 119 and 153 each coordinate substrate. Histidine 177 (proton acceptor) is an active-site residue. Methionine 227 is an NAD(+) binding site.

It belongs to the LDH/MDH superfamily. MDH type 1 family. As to quaternary structure, homodimer.

It catalyses the reaction (S)-malate + NAD(+) = oxaloacetate + NADH + H(+). Its function is as follows. Catalyzes the reversible oxidation of malate to oxaloacetate. The polypeptide is Malate dehydrogenase (Shewanella sp. (strain ANA-3)).